The primary structure comprises 263 residues: Follistatin-related protein 3 (263 aa).

Residues 1–26 form the signal peptide; sequence MRPGAPGPLWPLPWGALAWAVGFVSS. Positions 36 to 107 constitute a TB domain; the sequence is GVCWLQQGQE…SCDGVECGPG (72 aa). 13 disulfides stabilise this stretch: Cys-38–Cys-61, Cys-48–Cys-92, Cys-62–Cys-95, Cys-99–Cys-110, Cys-104–Cys-119, Cys-121–Cys-153, Cys-125–Cys-146, Cys-135–Cys-167, Cys-171–Cys-182, Cys-176–Cys-192, Cys-195–Cys-229, Cys-200–Cys-222, and Cys-211–Cys-243. N-linked (GlcNAc...) asparagine glycosylation occurs at Asn-73. Positions 99 to 119 constitute a Follistatin-like 1 domain; that stretch reads CDGVECGPGKACRMLGGRPRC. The Kazal-like 1 domain occupies 113-169; the sequence is LGGRPRCECAPDCSGLPARLQVCGSDGATYRDECELRAARCRGHPDLSVMYRGRCRK. Positions 170 to 193 constitute a Follistatin-like 2 domain; sequence SCEHVVCPRPQSCVVDQTGSAHCV. One can recognise a Kazal-like 2 domain in the interval 189–245; sequence SAHCVVCRAAPCPVPSSPGQELCGNNNVTYISSCHMRQATCFLGRSIGVRHAGSCAG. The N-linked (GlcNAc...) asparagine glycan is linked to Asn-215. The tract at residues 242–263 is disordered; that stretch reads SCAGTPEEPPGGESAEEEENFV. Ser-255 is modified (phosphoserine; by FAM20C).

Interacts with INHBA and INHBB. Interacts with FN1. Interacts with ADAM12. Isoform 2 interacts with MLLT10; the interaction enhances MLLT10 in vitro transcriptional activity and self-association. Interacts with MSTN. In terms of tissue distribution, expressed in a wide range of tissues.

It is found in the secreted. Its subcellular location is the nucleus. Isoform 1 or the secreted form is a binding and antagonizing protein for members of the TGF-beta family, such as activin, BMP2 and MSTN. Inhibits activin A-, activin B-, BMP2- and MSDT-induced cellular signaling; more effective on activin A than on activin B. Involved in bone formation; inhibits osteoclast differentiation. Involved in hematopoiesis; involved in differentiation of hemopoietic progenitor cells, increases hematopoietic cell adhesion to fibronectin and seems to contribute to the adhesion of hematopoietic precursor cells to the bone marrow stroma. Isoform 2 or the nuclear form is probably involved in transcriptional regulation via interaction with MLLT10. The sequence is that of Follistatin-related protein 3 (FSTL3) from Homo sapiens (Human).